Reading from the N-terminus, the 119-residue chain is MRGSSRFRPHEKLRASDDYQRVKRSGRRVRTAHFGVNFAANDLPHHRLGLVVQKRYWNAVGRNRIKRRIREWFRLNKTRIPAPYRDIVVVARPGAEKLSSLDVTKELLAIFLHKDGRIR.

Residues Met-1–Arg-24 are disordered. A compositionally biased stretch (basic and acidic residues) spans Arg-8–Arg-21.

It belongs to the RnpA family. Consists of a catalytic RNA component (M1 or rnpB) and a protein subunit.

It catalyses the reaction Endonucleolytic cleavage of RNA, removing 5'-extranucleotides from tRNA precursor.. Functionally, RNaseP catalyzes the removal of the 5'-leader sequence from pre-tRNA to produce the mature 5'-terminus. It can also cleave other RNA substrates such as 4.5S RNA. The protein component plays an auxiliary but essential role in vivo by binding to the 5'-leader sequence and broadening the substrate specificity of the ribozyme. The protein is Ribonuclease P protein component of Syntrophobacter fumaroxidans (strain DSM 10017 / MPOB).